Reading from the N-terminus, the 158-residue chain is Ribosome maturation factor RimP (158 aa).

This sequence belongs to the RimP family.

The protein localises to the cytoplasm. Its function is as follows. Required for maturation of 30S ribosomal subunits. The protein is Ribosome maturation factor RimP of Pseudomonas fluorescens (strain Pf0-1).